A 376-amino-acid polypeptide reads, in one-letter code: Probable ribonucleoside-diphosphate reductase small subunit 048L (376 aa).

Positions 110, 140, and 143 each coordinate Fe cation. Residue Tyr147 is part of the active site. Residues Glu217, Glu251, and His254 each contribute to the Fe cation site.

Belongs to the ribonucleoside diphosphate reductase small chain family. In terms of assembly, heterotetramer composed of a homodimer of the large subunit (R1) and a homodimer of the small subunit (R2). Larger multisubunit protein complex are also active, composed of (R1)n(R2)n. Fe cation is required as a cofactor.

The catalysed reaction is a 2'-deoxyribonucleoside 5'-diphosphate + [thioredoxin]-disulfide + H2O = a ribonucleoside 5'-diphosphate + [thioredoxin]-dithiol. Its function is as follows. Ribonucleoside-diphosphate reductase holoenzyme provides the precursors necessary for viral DNA synthesis. Allows virus growth in non-dividing cells. Catalyzes the biosynthesis of deoxyribonucleotides from the corresponding ribonucleotides. This is Probable ribonucleoside-diphosphate reductase small subunit 048L from Invertebrate iridescent virus 3 (IIV-3).